The chain runs to 483 residues: UDP-N-acetylmuramoyl-L-alanyl-D-glutamate--2,6-diaminopimelate ligase (483 aa).

Serine 30 contributes to the UDP-N-acetyl-alpha-D-muramoyl-L-alanyl-D-glutamate binding site. 109–115 (GTNGKTT) is an ATP binding site. UDP-N-acetyl-alpha-D-muramoyl-L-alanyl-D-glutamate contacts are provided by residues 151–152 (TT), serine 178, and arginine 186. Lysine 218 carries the post-translational modification N6-carboxylysine. Residues arginine 380, 403–406 (DNPR), glycine 453, and glutamate 457 each bind meso-2,6-diaminopimelate. The Meso-diaminopimelate recognition motif motif lies at 403–406 (DNPR).

Belongs to the MurCDEF family. MurE subfamily. Mg(2+) serves as cofactor. Post-translationally, carboxylation is probably crucial for Mg(2+) binding and, consequently, for the gamma-phosphate positioning of ATP.

It is found in the cytoplasm. The catalysed reaction is UDP-N-acetyl-alpha-D-muramoyl-L-alanyl-D-glutamate + meso-2,6-diaminopimelate + ATP = UDP-N-acetyl-alpha-D-muramoyl-L-alanyl-gamma-D-glutamyl-meso-2,6-diaminopimelate + ADP + phosphate + H(+). It functions in the pathway cell wall biogenesis; peptidoglycan biosynthesis. Functionally, catalyzes the addition of meso-diaminopimelic acid to the nucleotide precursor UDP-N-acetylmuramoyl-L-alanyl-D-glutamate (UMAG) in the biosynthesis of bacterial cell-wall peptidoglycan. The polypeptide is UDP-N-acetylmuramoyl-L-alanyl-D-glutamate--2,6-diaminopimelate ligase (Chlamydia trachomatis serovar A (strain ATCC VR-571B / DSM 19440 / HAR-13)).